A 183-amino-acid chain; its full sequence is NADH-ubiquinone oxidoreductase 20.8 kDa subunit (183 aa).

CHCH domains lie at 44-87 (GARC…IADI) and 88-130 (NKSC…LGLK). 4 short sequence motifs (cx9C motif) span residues 47–57 (CRDYNDDFMQC), 69–79 (CLKEGRRVTRC), 91–101 (CLEEFRKHWTC), and 112–122 (CRPAEWKLNKC). Intrachain disulfides connect C47/C79, C57/C69, C91/C122, and C101/C112. The segment at 161 to 183 (EPFVPPTQTGDNNKAPAAASSSS) is disordered.

It belongs to the complex I NDUFA8 subunit family. Complex I is composed of about 40 different subunits. This is a component of the hydrophobic fraction. Requires iron-sulfur cluster as cofactor.

It localises to the mitochondrion inner membrane. In terms of biological role, accessory subunit of the mitochondrial membrane respiratory chain NADH dehydrogenase (Complex I), that is believed not to be involved in catalysis. Complex I functions in the transfer of electrons from NADH to the respiratory chain. The immediate electron acceptor for the enzyme is believed to be ubiquinone. This is NADH-ubiquinone oxidoreductase 20.8 kDa subunit from Neurospora crassa (strain ATCC 24698 / 74-OR23-1A / CBS 708.71 / DSM 1257 / FGSC 987).